The chain runs to 549 residues: MKNINPTQTAAWQALQKHFDEMKDVTIADLFAKDGDRFSKFSATFGDQMLVDYSKNRITEETLAKLQDLAKECDLAGAIKSMFSGEKINRTENRAVLHVALRNRSNTPILVDGKDVMPEVNAVLEKMKTFSEAIISGEWKGYTGKAITDVVNIGIGGSDLGPYMVTEALRPYKNHLNMHFVSNVDGTHIAEVLKKVNPETTLFLVASKTFTTQETMTNAHSARDWFLKAAGDEKHVAKHFAALSTNAKAVGEFGIDTANMFEFWDWVGGRYSLWSAIGLSIVLSIGFDNFVELLSGAHAMDKHFSTTPAEKNLPVLLALIGIWYNNFFGAETEAILPYDQYMHRFAAYFQQGNMESNGKYVDRNGNVVDYQTGPIIWGEPGTNGQHAFYQLIHQGTKMVPCDFIAPAITHNPLSDHHQKLLSNFFAQTEALAFGKSREVVEQEYRDQGKDPATLDYVVPFKVFEGNRPTNSILLREITPFSLGALIALYEHKIFTQGVILNIFTFDQWGVELGKQLANRILPELKDGKEISSHDSSTNGLINRYKAWRG.

Residues lysine 80, lysine 228, and lysine 234 each carry the N6-acetyllysine modification. The active-site Proton donor is the glutamate 355. Catalysis depends on residues histidine 386 and lysine 514.

Belongs to the GPI family.

The protein resides in the cytoplasm. The catalysed reaction is alpha-D-glucose 6-phosphate = beta-D-fructose 6-phosphate. It functions in the pathway carbohydrate biosynthesis; gluconeogenesis. The protein operates within carbohydrate degradation; glycolysis; D-glyceraldehyde 3-phosphate and glycerone phosphate from D-glucose: step 2/4. In terms of biological role, catalyzes the reversible isomerization of glucose-6-phosphate to fructose-6-phosphate. This is Glucose-6-phosphate isomerase from Escherichia coli (strain SE11).